A 31-amino-acid polypeptide reads, in one-letter code: Protamine-1B (31 aa).

Residues 1–31 (MPRRRRASRRIRRRRRPRVSRRRRRGGRRRR) are disordered.

In terms of tissue distribution, testis.

It localises to the nucleus. Its subcellular location is the chromosome. Its function is as follows. Protamines substitute for histones in the chromatin of sperm during the haploid phase of spermatogenesis. They compact sperm DNA into a highly condensed, stable and inactive complex. The chain is Protamine-1B from Oncorhynchus mykiss (Rainbow trout).